We begin with the raw amino-acid sequence, 385 residues long: 3-dehydroquinate synthase (385 aa).

Residues 122 to 126, 146 to 147, Lys-159, and Lys-168 each bind NAD(+); these read GVIGD and TT. Residues Glu-201, His-264, and His-282 each coordinate Zn(2+).

This sequence belongs to the sugar phosphate cyclases superfamily. Dehydroquinate synthase family. The cofactor is Co(2+). Zn(2+) is required as a cofactor. Requires NAD(+) as cofactor.

Its subcellular location is the cytoplasm. The catalysed reaction is 7-phospho-2-dehydro-3-deoxy-D-arabino-heptonate = 3-dehydroquinate + phosphate. It participates in metabolic intermediate biosynthesis; chorismate biosynthesis; chorismate from D-erythrose 4-phosphate and phosphoenolpyruvate: step 2/7. In terms of biological role, catalyzes the conversion of 3-deoxy-D-arabino-heptulosonate 7-phosphate (DAHP) to dehydroquinate (DHQ). This Rhodospirillum rubrum (strain ATCC 11170 / ATH 1.1.1 / DSM 467 / LMG 4362 / NCIMB 8255 / S1) protein is 3-dehydroquinate synthase.